Reading from the N-terminus, the 111-residue chain is Large ribosomal subunit protein eL33x (111 aa).

It belongs to the eukaryotic ribosomal protein eL33 family.

The sequence is that of Large ribosomal subunit protein eL33x (RPL35AD) from Arabidopsis thaliana (Mouse-ear cress).